A 252-amino-acid polypeptide reads, in one-letter code: MSLTGLPDIRKKIGQFHHLRIYKQILSFQGNFARLNYFLGDVFPANLRSASVSVFFEVRLGPRIPDCIVLLKSVDVKDEFAFHCYFFEFKTTLGKSTMQSVHHNCIHQAQYLQGLRQLQQSISFLDQYLIADEVSWNVVPVICFFRQWGLKLDFFKKFSGKTKRLSFSFIRDLFARSQDGAVQSLLSIPNYTNFRRACQKHTDLYRKRCRKAPKSVLTKTSGENRSRASRQVAKNAPKNRIRRTAKKDAKRQ.

The disordered stretch occupies residues S215–Q252. The span at P237–Q252 shows a compositional bias: basic residues.

This sequence belongs to the herpesviridae UL24 family.

It localises to the virion. The protein localises to the host cytoplasm. Its subcellular location is the host nucleus. The protein resides in the host nucleolus. It is found in the host Golgi apparatus. Its function is as follows. May participate in nuclear egress of viral particles. Plays a role in the dispersal of several host nucleolar proteins including NCL/nucleolin and NPM1. Since deletion of host NCL/nucleolin negatively impact on nuclear egress, UL24 supposedly acts on this process through its effect on host nucleoli. The protein is Protein UL24 homolog (U49) of Homo sapiens (Human).